The chain runs to 882 residues: Translation initiation factor IF-2 (882 aa).

2 disordered regions span residues 67–202 and 223–278; these read KTVS…EKAR and ERYG…KHMK. Composition is skewed to basic and acidic residues over residues 95–152 and 161–202; these read VKRD…EAKA and EQPK…EKAR. The segment covering 251-264 has biased composition (basic residues); the sequence is GRRNRNKTQTKSKR. Residues 265-274 show a composition bias toward basic and acidic residues; that stretch reads GGKDAREGRE. Residues 382–551 enclose the tr-type G domain; that stretch reads PRAPVVTIMG…LLQAEVLELK (170 aa). Residues 391–398 are G1; it reads GHVDHGKT. 391-398 is a GTP binding site; sequence GHVDHGKT. The tract at residues 416–420 is G2; sequence GITQH. The interval 437 to 440 is G3; sequence DTPG. GTP contacts are provided by residues 437–441 and 491–494; these read DTPGH and NKMD. Positions 491-494 are G4; that stretch reads NKMD. The interval 527 to 529 is G5; it reads SAK.

Belongs to the TRAFAC class translation factor GTPase superfamily. Classic translation factor GTPase family. IF-2 subfamily.

It is found in the cytoplasm. In terms of biological role, one of the essential components for the initiation of protein synthesis. Protects formylmethionyl-tRNA from spontaneous hydrolysis and promotes its binding to the 30S ribosomal subunits. Also involved in the hydrolysis of GTP during the formation of the 70S ribosomal complex. The sequence is that of Translation initiation factor IF-2 from Shewanella amazonensis (strain ATCC BAA-1098 / SB2B).